We begin with the raw amino-acid sequence, 383 residues long: MTAPADLSPTLQLACDLIRRPSVTPVDADCQTVMMQRLGDAGFKLEPMRIEDVDNFWATHGTTDGPVLCFAGHTDVVPTGPLQNWQNDPFDALIDEHGMLCGRGAADMKGSLAAMLVAAERFVADHPDHKGSVAFLITSDEEGPAHHGTKAVVERLAARNERLDWCIVGEPSSTTLVGDVVKNGRRGSLGATLTVRGKQGHVAYPHLAKNPIHLAAPALAELAAEHWDHGNDFFPPTSFQISNLNAGTGATNVIPGDLVAVFNFRFSTESTVEGLQQRVADILDRHELDWHVDWALSGLPFLTEPGALLDAVSSSIKSVTGRETKASTSGGTSDGRFIATLGTQVVELGPVNATIHQVNERILASDLDVLTEIYYQTLVKLLA.

His73 is a Zn(2+) binding site. Asp75 is a catalytic residue. Asp107 provides a ligand contact to Zn(2+). Glu141 (proton acceptor) is an active-site residue. Zn(2+)-binding residues include Glu142, Glu170, and His356.

This sequence belongs to the peptidase M20A family. DapE subfamily. Homodimer. It depends on Zn(2+) as a cofactor. Requires Co(2+) as cofactor.

The enzyme catalyses N-succinyl-(2S,6S)-2,6-diaminopimelate + H2O = (2S,6S)-2,6-diaminopimelate + succinate. It functions in the pathway amino-acid biosynthesis; L-lysine biosynthesis via DAP pathway; LL-2,6-diaminopimelate from (S)-tetrahydrodipicolinate (succinylase route): step 3/3. Functionally, catalyzes the hydrolysis of N-succinyl-L,L-diaminopimelic acid (SDAP), forming succinate and LL-2,6-diaminopimelate (DAP), an intermediate involved in the bacterial biosynthesis of lysine and meso-diaminopimelic acid, an essential component of bacterial cell walls. This Pseudomonas syringae pv. syringae (strain B728a) protein is Succinyl-diaminopimelate desuccinylase.